The chain runs to 293 residues: Sec-independent protein translocase protein TatC (293 aa).

6 consecutive transmembrane segments (helical) span residues 35–55 (AAIA…QPFI), 87–107 (LLKV…LYQA), 123–143 (LFGF…ISYF), 173–193 (ILKF…LVGI), 204–224 (ILKS…LTAP), and 228–248 (IMMM…AIGI).

Belongs to the TatC family. The Tat system comprises two distinct complexes: a TatABC complex, containing multiple copies of TatA, TatB and TatC subunits, and a separate TatA complex, containing only TatA subunits. Substrates initially bind to the TatABC complex, which probably triggers association of the separate TatA complex to form the active translocon.

The protein resides in the cell membrane. In terms of biological role, part of the twin-arginine translocation (Tat) system that transports large folded proteins containing a characteristic twin-arginine motif in their signal peptide across membranes. Together with TatB, TatC is part of a receptor directly interacting with Tat signal peptides. The chain is Sec-independent protein translocase protein TatC from Rothia mucilaginosa (strain DY-18) (Stomatococcus mucilaginosus).